Consider the following 307-residue polypeptide: Thymidylate synthase (307 aa).

A dUMP-binding site is contributed by R44. S108 carries the phosphoserine modification. Residues 169–170, 189–190, 209–212, N220, and 250–252 each bind dUMP; these read RR, CH, RSGD, and HIY. C189 serves as the catalytic Nucleophile. Residue D212 coordinates (6R)-5,10-methylene-5,6,7,8-tetrahydrofolate. Glycyl lysine isopeptide (Lys-Gly) (interchain with G-Cter in SUMO2) cross-links involve residues K286 and K302. Residue A306 coordinates (6R)-5,10-methylene-5,6,7,8-tetrahydrofolate.

It belongs to the thymidylate synthase family. As to quaternary structure, homodimer.

Its subcellular location is the nucleus. The protein resides in the cytoplasm. The protein localises to the mitochondrion. It is found in the mitochondrion matrix. It localises to the mitochondrion inner membrane. The enzyme catalyses dUMP + (6R)-5,10-methylene-5,6,7,8-tetrahydrofolate = 7,8-dihydrofolate + dTMP. It functions in the pathway pyrimidine metabolism; dTTP biosynthesis. Catalyzes the reductive methylation of 2'-deoxyuridine 5'-monophosphate (dUMP) to thymidine 5'-monophosphate (dTMP), using the cosubstrate, 5,10- methylenetetrahydrofolate (CH2H4folate) as a 1-carbon donor and reductant and contributes to the de novo mitochondrial thymidylate biosynthesis pathway. The protein is Thymidylate synthase (Tyms) of Mus musculus (Mouse).